The chain runs to 321 residues: Probable 1-aminocyclopropane-1-carboxylate oxidase (321 aa).

In terms of domain architecture, Fe2OG dioxygenase spans 159-259 (PTFGTKVSNY…RMSIASFYNP (101 aa)). Residues His183, Asp185, and His240 each coordinate Fe cation.

It belongs to the iron/ascorbate-dependent oxidoreductase family. Fe cation serves as cofactor.

The catalysed reaction is 1-aminocyclopropane-1-carboxylate + L-ascorbate + O2 = ethene + L-dehydroascorbate + hydrogen cyanide + CO2 + 2 H2O. It participates in alkene biosynthesis; ethylene biosynthesis via S-adenosyl-L-methionine; ethylene from S-adenosyl-L-methionine: step 2/2. The chain is Probable 1-aminocyclopropane-1-carboxylate oxidase (ACO) from Dianthus caryophyllus (Carnation).